A 386-amino-acid chain; its full sequence is Phosphoglycerate kinase (386 aa).

Residues 21 to 23 (DLN), Arg-36, 59 to 62 (HLGR), Arg-113, and Arg-146 each bind substrate. Residues Lys-197, Glu-314, and 340–343 (GGDT) each bind ATP.

Belongs to the phosphoglycerate kinase family. As to quaternary structure, monomer.

It is found in the cytoplasm. It carries out the reaction (2R)-3-phosphoglycerate + ATP = (2R)-3-phospho-glyceroyl phosphate + ADP. It participates in carbohydrate degradation; glycolysis; pyruvate from D-glyceraldehyde 3-phosphate: step 2/5. The chain is Phosphoglycerate kinase from Azotobacter vinelandii (strain DJ / ATCC BAA-1303).